The primary structure comprises 346 residues: Probable RNA methyltransferase Pmen_2155 (346 aa).

Glu-91 serves as the catalytic Proton acceptor. A Radical SAM core domain is found at 94-320 (LLPRDGLCIS…TKVRNSAGQD (227 aa)). An intrachain disulfide couples Cys-101 to Cys-325. Positions 108, 112, and 115 each coordinate [4Fe-4S] cluster. S-adenosyl-L-methionine is bound by residues 153–154 (GE), Ser-183, 206–208 (SLH), and Asn-282. Cys-325 (S-methylcysteine intermediate) is an active-site residue.

It belongs to the radical SAM superfamily. RlmN family. The cofactor is [4Fe-4S] cluster.

It is found in the cytoplasm. The polypeptide is Probable RNA methyltransferase Pmen_2155 (Ectopseudomonas mendocina (strain ymp) (Pseudomonas mendocina)).